The primary structure comprises 90 residues: U7-theraphotoxin-Hhn1k (90 aa).

A signal peptide spans 1–19; that stretch reads MKTAIFTVVLALAVFAVLS. Positions 20–50 are excised as a propeptide; the sequence is FGWEANEKALSEEFTELIHEKEAASETEARE. Disulfide bonds link C51/C65 and C58/C70.

This sequence belongs to the neurotoxin 10 (Hwtx-1) family. 13 (Hntx-13) subfamily. As to expression, expressed by the venom gland.

It is found in the secreted. In terms of biological role, ion channel inhibitor. The polypeptide is U7-theraphotoxin-Hhn1k (Cyriopagopus hainanus (Chinese bird spider)).